Here is a 500-residue protein sequence, read N- to C-terminus: Glucokinase-1 (500 aa).

Ser-2 is subject to N-acetylserine. Ser-2 bears the Phosphoserine mark. In terms of domain architecture, Hexokinase spans 12 to 498 (RAVIQAVDQI…SGVGAALCAL (487 aa)). The interval 74-216 (NGTERGVLLA…MPMIKVVALT (143 aa)) is hexokinase small subdomain. Lys-110 contacts ATP. Residues 158–184 (KLGFTFSYPVDQTSLNSGTLIRWTKGF) form a glucose-binding region. The hexokinase large subdomain stretch occupies residues 217-487 (NDTVGTYLSH…RKVHLKIAKD (271 aa)). A Phosphoserine modification is found at Ser-470. 487–492 (DGSGVG) contacts ATP.

It belongs to the hexokinase family. In terms of assembly, monomer.

The catalysed reaction is D-glucose + ATP = D-glucose 6-phosphate + ADP + H(+). It participates in carbohydrate metabolism; hexose metabolism. The protein operates within carbohydrate degradation; glycolysis; D-glyceraldehyde 3-phosphate and glycerone phosphate from D-glucose: step 1/4. Functionally, two isoenzymes, hexokinase-1 and hexokinase-2, can phosphorylate keto- and aldohexoses in yeast, whereas a third isoenzyme, GLK, is specific for aldohexoses. All glucose phosphorylating enzymes are involved in glucose uptake. This is Glucokinase-1 (GLK1) from Saccharomyces cerevisiae (strain ATCC 204508 / S288c) (Baker's yeast).